Here is a 238-residue protein sequence, read N- to C-terminus: Opacity protein opA68 (238 aa).

A signal peptide is located at residue A1. The segment at 88 to 109 is disordered; the sequence is NLQRRTSNGNRRDRKTENQENG.

It belongs to the opacity porin family.

It localises to the cell outer membrane. Its function is as follows. Implicated in a number of adherence functions. OPA proteins are implicated in pathogenesis and are subject to phase variation. The sequence is that of Opacity protein opA68 from Neisseria gonorrhoeae.